Here is a 298-residue protein sequence, read N- to C-terminus: Acetate permease A (298 aa).

The tract at residues 1–43 (MSAEQNHGLEKDVGGPAAPAAAAPNAPAAAPGAPPAGMSAEEH) is disordered. The segment covering 14 to 37 (GGPAAPAAAAPNAPAAAPGAPPAG) has biased composition (low complexity). Transmembrane regions (helical) follow at residues 86 to 106 (APLG…INMG), 115 to 135 (IVIA…GMWE), 146 to 166 (ALSS…PGGF), 185 to 205 (SFGL…FCTL), 210 to 230 (AFFL…VGYI), and 245 to 265 (AGGF…LAGI).

It belongs to the acetate uptake transporter (AceTr) (TC 2.A.96) family.

It is found in the cell membrane. It localises to the vacuole membrane. In terms of biological role, high affinity monocarboxylate transporter (MCT) involved in acetate uptake. Unlike other activities involved in acetate utilization, acpA is dispensable for growth on the acetate precursor ethanol. This Emericella nidulans (strain FGSC A4 / ATCC 38163 / CBS 112.46 / NRRL 194 / M139) (Aspergillus nidulans) protein is Acetate permease A.